The primary structure comprises 479 residues: Ribulose bisphosphate carboxylase large chain (479 aa).

A propeptide spanning residues 1–2 (MS) is cleaved from the precursor. Proline 3 is modified (N-acetylproline). Substrate contacts are provided by residues threonine 65, asparagine 123, 173–177 (TIKPK), and 201–204 (KDDE). Lysine 175 functions as the Proton acceptor in the catalytic mechanism. Mg(2+) is bound by residues lysine 201, aspartate 203, and glutamate 204. Lysine 201 bears the N6-carboxylysine mark. Serine 208 bears the Phosphoserine mark. Histidine 294 functions as the Proton acceptor in the catalytic mechanism. Residues 294-295 (HR) and histidine 327 contribute to the substrate site. Threonine 330 carries the phosphothreonine modification. Substrate contacts are provided by residues lysine 334 and 379 to 381 (SGG).

This sequence belongs to the RuBisCO large chain family. Type I subfamily. As to quaternary structure, heterohexadecamer of 8 large chains and 8 small chains; disulfide-linked. The disulfide link is formed within the large subunit homodimers. Interacts with RBCX1 and RBCX1. An intermediate complex made of eight RbcL subunits interacts with the chaperone BSD2. Mg(2+) is required as a cofactor. Post-translationally, the disulfide bond which can form in the large chain dimeric partners within the hexadecamer appears to be associated with oxidative stress and protein turnover.

Its subcellular location is the plastid. It is found in the chloroplast. The enzyme catalyses 2 (2R)-3-phosphoglycerate + 2 H(+) = D-ribulose 1,5-bisphosphate + CO2 + H2O. It carries out the reaction D-ribulose 1,5-bisphosphate + O2 = 2-phosphoglycolate + (2R)-3-phosphoglycerate + 2 H(+). RuBisCO catalyzes two reactions: the carboxylation of D-ribulose 1,5-bisphosphate, the primary event in carbon dioxide fixation, as well as the oxidative fragmentation of the pentose substrate in the photorespiration process. Both reactions occur simultaneously and in competition at the same active site. Binds to abscisic acid (ABA). This is Ribulose bisphosphate carboxylase large chain from Arabidopsis thaliana (Mouse-ear cress).